Reading from the N-terminus, the 195-residue chain is Probable nicotinate-nucleotide adenylyltransferase (195 aa).

Belongs to the NadD family.

It catalyses the reaction nicotinate beta-D-ribonucleotide + ATP + H(+) = deamido-NAD(+) + diphosphate. It functions in the pathway cofactor biosynthesis; NAD(+) biosynthesis; deamido-NAD(+) from nicotinate D-ribonucleotide: step 1/1. Catalyzes the reversible adenylation of nicotinate mononucleotide (NaMN) to nicotinic acid adenine dinucleotide (NaAD). In Mesorhizobium japonicum (strain LMG 29417 / CECT 9101 / MAFF 303099) (Mesorhizobium loti (strain MAFF 303099)), this protein is Probable nicotinate-nucleotide adenylyltransferase.